Consider the following 408-residue polypeptide: Guanine nucleotide-binding protein alpha-14 subunit (408 aa).

GTP contacts are provided by residues 39–46 (HSEELEAK), 79–86 (GGPLSGKS), 201–205 (TRIAD), 216–222 (VHSRKAT), 241–245 (DVGGQ), 285–288 (FPKF), 325–328 (NKVD), and Ala-380. The G-alpha domain maps to 71-408 (SHIKILILGG…KANAKATGLS (338 aa)). The interval 74–87 (KILILGGPLSGKST) is G1 motif. Ser-86 lines the Mg(2+) pocket. The tract at residues 214–222 (DIVHSRKAT) is G2 motif. Position 222 (Thr-222) interacts with Mg(2+). The G3 motif stretch occupies residues 237-246 (LLMIDVGGQR). The segment at 321 to 328 (LLFFNKVD) is G4 motif. The G5 motif stretch occupies residues 378–383 (TTATNT).

Belongs to the G-alpha family. G proteins are composed of 3 units; alpha, beta and gamma. The alpha chain contains the guanine nucleotide binding site. Interacts with the dopamine receptor dop-2 (via C-terminus); the interaction is direct.

In terms of biological role, guanine nucleotide-binding proteins (G proteins) are involved as modulators or transducers in various transmembrane signaling systems. In association with the G-protein coupled dopamine receptor dop-2, modulates two types of learning: touch habituation and chemosensory associative conditioning. This Caenorhabditis elegans protein is Guanine nucleotide-binding protein alpha-14 subunit.